The primary structure comprises 481 residues: Proline--tRNA ligase (481 aa).

This sequence belongs to the class-II aminoacyl-tRNA synthetase family. ProS type 3 subfamily. Homodimer.

It is found in the cytoplasm. It catalyses the reaction tRNA(Pro) + L-proline + ATP = L-prolyl-tRNA(Pro) + AMP + diphosphate. Its function is as follows. Catalyzes the attachment of proline to tRNA(Pro) in a two-step reaction: proline is first activated by ATP to form Pro-AMP and then transferred to the acceptor end of tRNA(Pro). This chain is Proline--tRNA ligase, found in Saccharolobus islandicus (strain M.16.27) (Sulfolobus islandicus).